Reading from the N-terminus, the 339-residue chain is Phosphoribosylformylglycinamidine cyclo-ligase (339 aa).

This sequence belongs to the AIR synthase family.

The protein localises to the cytoplasm. It carries out the reaction 2-formamido-N(1)-(5-O-phospho-beta-D-ribosyl)acetamidine + ATP = 5-amino-1-(5-phospho-beta-D-ribosyl)imidazole + ADP + phosphate + H(+). It functions in the pathway purine metabolism; IMP biosynthesis via de novo pathway; 5-amino-1-(5-phospho-D-ribosyl)imidazole from N(2)-formyl-N(1)-(5-phospho-D-ribosyl)glycinamide: step 2/2. This is Phosphoribosylformylglycinamidine cyclo-ligase from Desulfitobacterium hafniense (strain DSM 10664 / DCB-2).